The following is a 399-amino-acid chain: (R)-2-hydroxy-4-methylpentanoate CoA-transferase (399 aa).

The Nucleophile role is filled by aspartate 171.

This sequence belongs to the CoA-transferase III family. In terms of assembly, homodimer.

It catalyses the reaction 4-methylpentanoyl-CoA + (2R)-hydroxy-4-methylpentanoate = (R)-2-hydroxy-4-methylpentanoyl-CoA + 4-methylpentanoate. It participates in amino-acid degradation; L-leucine degradation. Involved in the reductive branch of L-leucine fermentation. Catalyzes the transfer of the CoA moiety from 4-methylpentanoyl-CoA (isocaproyl-CoA) to (R)-2-hydroxy-4-methylpentanoate ((R)-2-hydroxyisocaproate), leading to the formation of (R)-2-hydroxy-4-methylpentanoyl-CoA. Other CoA thioesters, such as acetyl-CoA or butyryl-CoA, are not accepted as substrates. The protein is (R)-2-hydroxy-4-methylpentanoate CoA-transferase of Clostridioides difficile (Peptoclostridium difficile).